The following is a 378-amino-acid chain: Putative F-box protein At5g51000 (378 aa).

Residues 1 to 47 form the F-box domain; sequence MSTMSDLFPDLVEEILSRVPITSLKAVKLTCKQWNDLSKDSSFTKNH.

This is Putative F-box protein At5g51000 from Arabidopsis thaliana (Mouse-ear cress).